The chain runs to 1101 residues: Zinc finger SWIM domain-containing protein 4 (1101 aa).

Residues 1-29 (MEPPAAKRSRGCPAGDEPGTGARRSRPEP) are disordered. The SWIM-type zinc finger occupies 134–171 (YHVSISFDRCKITSVSCGCDNRDLFYCAHVVALSLYRI).

The chain is Zinc finger SWIM domain-containing protein 4 (Zswim4) from Mus musculus (Mouse).